We begin with the raw amino-acid sequence, 38 residues long: Kunitz-type trypsin inhibitor beta chain (38 aa).

It belongs to the protease inhibitor I3 (leguminous Kunitz-type inhibitor) family. In terms of assembly, heterodimer of an alpha and a beta chain linked by a disulfide bond.

In terms of biological role, inhibition of trypsin. This chain is Kunitz-type trypsin inhibitor beta chain, found in Neltuma juliflora (Mesquite).